The chain runs to 85 residues: Large ribosomal subunit protein bL27 (85 aa).

The segment at 1–20 is disordered; it reads MAHKKAGGSSRNGRDSEAKR.

This sequence belongs to the bacterial ribosomal protein bL27 family.

This Aeromonas salmonicida (strain A449) protein is Large ribosomal subunit protein bL27.